The sequence spans 139 residues: Ribulose bisphosphate carboxylase small subunit (139 aa).

It belongs to the RuBisCO small chain family. In terms of assembly, heterohexadecamer of 8 large and 8 small subunits.

It is found in the plastid. The protein resides in the chloroplast. Functionally, ruBisCO catalyzes two reactions: the carboxylation of D-ribulose 1,5-bisphosphate, the primary event in carbon dioxide fixation, as well as the oxidative fragmentation of the pentose substrate in the photorespiration process. Both reactions occur simultaneously and in competition at the same active site. Although the small subunit is not catalytic it is essential for maximal activity. This chain is Ribulose bisphosphate carboxylase small subunit, found in Pylaiella littoralis (Seaweed).